The sequence spans 160 residues: Cell division protein SepF (160 aa).

Over residues 18–30 the composition is skewed to acidic residues; sequence AEGEDDFEDDVDT. The disordered stretch occupies residues 18-72; the sequence is AEGEDDFEDDVDTGETSFDSDHSVTPMPSSSASASTPSAPREQSNPFQGGRVSRI. The span at 45-57 shows a compositional bias: low complexity; sequence PSSSASASTPSAP.

Belongs to the SepF family. As to quaternary structure, homodimer. Interacts with FtsZ.

It is found in the cytoplasm. Functionally, cell division protein that is part of the divisome complex and is recruited early to the Z-ring. Probably stimulates Z-ring formation, perhaps through the cross-linking of FtsZ protofilaments. Its function overlaps with FtsA. In Bifidobacterium adolescentis (strain ATCC 15703 / DSM 20083 / NCTC 11814 / E194a), this protein is Cell division protein SepF.